Reading from the N-terminus, the 182-residue chain is Chromophore lyase CpcS/CpeS (182 aa).

The protein belongs to the CpcS/CpeS biliprotein lyase family.

Its function is as follows. Covalently attaches a chromophore to Cys residue(s) of phycobiliproteins. The polypeptide is Chromophore lyase CpcS/CpeS (Thermosynechococcus vestitus (strain NIES-2133 / IAM M-273 / BP-1)).